A 394-amino-acid polypeptide reads, in one-letter code: MYTCGNRKVIPNMPDLILRKIFDQYDYPVLCKMERVCRRWTNIINSKFRKEIHEISIERLGSMFPQAHQCVPFRRLSISCPSDSHDFLAGVFRRSRLSFMKMTTDINFLAGIDQIHVSKDNGRRYFSNVEDLWLLMIHPDDDVTQRFLAIEGTLFSELQQLTLQVHVNPRYYKNVGEIVKSFILRYPKSNINLELHAEKSMHILNQISNLPSLPLYKIKLICTDFDQPQLRLDQLYAVMREQNIQAKNITMRDWSLFADGTTPVSYNPLDTFRISSCSIETVDNLVKSIQMTASQGTHVDGVPPTKKKKVIRKKKETEVVTEEGVLPKPKKKVVKKVVKKKKPIAFIKKLEVAGQCTLHGLTFLQQKAHTELERRLTTLVPGLDVDCSEIYYCW.

The F-box domain occupies 7 to 51; it reads RKVIPNMPDLILRKIFDQYDYPVLCKMERVCRRWTNIINSKFRKE.

This is an uncharacterized protein from Caenorhabditis elegans.